The following is a 180-amino-acid chain: Major urinary protein 17 (180 aa).

Positions 1-18 (MKMLLLLCLGLTLVCVHA) are cleaved as a signal peptide. A disulfide bond links Cys-82 and Cys-175.

It belongs to the calycin superfamily. Lipocalin family. As to expression, because of their involvement in the coordination of social behavior, Mup proteins are thought to exhibit variable expression depending upon gender, age and status of the studied individuals. Expression may also be strain-specific: in strains C57BL/6J and 129S7, transcriptional support is lacking for Mup17.

Its subcellular location is the secreted. In terms of biological role, major urinary proteins (Mups) bind pheromones, thus stabilize them and allow slow release into the air from urine marks. May protect pheromones from oxidation. May also act as pheromones themselves. In this context, they play a role in the regulation of social behaviors, such as aggression, mating, pup-suckling, territory establishment and dominance. This chain is Major urinary protein 17 (Mup17), found in Mus musculus (Mouse).